The chain runs to 63 residues: Alpha-conotoxin-like Sm1.3 (63 aa).

A signal peptide spans 1 to 16; that stretch reads MFTVFLLVVLATTVVS. A propeptide spanning residues 17–43 is cleaved from the precursor; it reads SPSDRASDGRNAAANEKASDVIALALK. Cystine bridges form between C45–C51 and C46–C59. Position 58 is a methionine sulfoxide; partial (M58). At C59 the chain carries Cysteine amide; partial.

The protein belongs to the conotoxin A superfamily. In terms of tissue distribution, expressed by the venom duct.

It localises to the secreted. Alpha-conotoxins act on postsynaptic membranes, they bind to the nicotinic acetylcholine receptors (nAChR) and thus inhibit them. The sequence is that of Alpha-conotoxin-like Sm1.3 from Conus stercusmuscarum (Fly-specked cone).